A 629-amino-acid polypeptide reads, in one-letter code: tRNA uridine 5-carboxymethylaminomethyl modification enzyme MnmG (629 aa).

Residues glycine 13 to glycine 18, valine 125, and serine 180 contribute to the FAD site. Residue glycine 273–phenylalanine 287 coordinates NAD(+). Glutamine 370 lines the FAD pocket.

It belongs to the MnmG family. In terms of assembly, homodimer. Heterotetramer of two MnmE and two MnmG subunits. The cofactor is FAD.

The protein resides in the cytoplasm. Its function is as follows. NAD-binding protein involved in the addition of a carboxymethylaminomethyl (cmnm) group at the wobble position (U34) of certain tRNAs, forming tRNA-cmnm(5)s(2)U34. The sequence is that of tRNA uridine 5-carboxymethylaminomethyl modification enzyme MnmG from Salmonella choleraesuis (strain SC-B67).